Here is a 364-residue protein sequence, read N- to C-terminus: Chorismate synthase (364 aa).

Arg48 provides a ligand contact to NADP(+). FMN contacts are provided by residues 125-127, 237-238, Gly277, 292-296, and Arg318; these read RSS, NA, and KPTSS.

It belongs to the chorismate synthase family. In terms of assembly, homotetramer. FMNH2 serves as cofactor.

The enzyme catalyses 5-O-(1-carboxyvinyl)-3-phosphoshikimate = chorismate + phosphate. The protein operates within metabolic intermediate biosynthesis; chorismate biosynthesis; chorismate from D-erythrose 4-phosphate and phosphoenolpyruvate: step 7/7. Catalyzes the anti-1,4-elimination of the C-3 phosphate and the C-6 proR hydrogen from 5-enolpyruvylshikimate-3-phosphate (EPSP) to yield chorismate, which is the branch point compound that serves as the starting substrate for the three terminal pathways of aromatic amino acid biosynthesis. This reaction introduces a second double bond into the aromatic ring system. In Albidiferax ferrireducens (strain ATCC BAA-621 / DSM 15236 / T118) (Rhodoferax ferrireducens), this protein is Chorismate synthase.